Reading from the N-terminus, the 190-residue chain is Potassium-transporting ATPase KdpC subunit (190 aa).

The helical transmembrane segment at 10 to 30 threads the bilayer; sequence TFIFLLLITGGVYPLLTTALG.

This sequence belongs to the KdpC family. As to quaternary structure, the system is composed of three essential subunits: KdpA, KdpB and KdpC.

Its subcellular location is the cell inner membrane. Functionally, part of the high-affinity ATP-driven potassium transport (or Kdp) system, which catalyzes the hydrolysis of ATP coupled with the electrogenic transport of potassium into the cytoplasm. This subunit acts as a catalytic chaperone that increases the ATP-binding affinity of the ATP-hydrolyzing subunit KdpB by the formation of a transient KdpB/KdpC/ATP ternary complex. The chain is Potassium-transporting ATPase KdpC subunit from Escherichia coli O157:H7.